Here is a 226-residue protein sequence, read N- to C-terminus: PKHD-type hydroxylase Pfl01_0799 (226 aa).

One can recognise a Fe2OG dioxygenase domain in the interval 78–178 (KVFPPLLNCY…RYASFFWTQS (101 aa)). Positions 96, 98, and 159 each coordinate Fe cation. Arginine 169 contacts 2-oxoglutarate.

Fe(2+) serves as cofactor. Requires L-ascorbate as cofactor.

This Pseudomonas fluorescens (strain Pf0-1) protein is PKHD-type hydroxylase Pfl01_0799.